The chain runs to 171 residues: Transcription factor E (171 aa).

One can recognise an HTH TFE/IIEalpha-type domain in the interval 5–91; it reads DNKAVRGYIQ…LWKLDLDNSV (87 aa).

This sequence belongs to the TFE family. Monomer. Interaction with RNA polymerase subunits RpoF and RpoE is necessary for Tfe stimulatory transcription activity. Able to interact with Tbp and RNA polymerase in the absence of DNA promoter. Interacts both with the preinitiation and elongation complexes.

In terms of biological role, transcription factor that plays a role in the activation of archaeal genes transcribed by RNA polymerase. Facilitates transcription initiation by enhancing TATA-box recognition by TATA-box-binding protein (Tbp), and transcription factor B (Tfb) and RNA polymerase recruitment. Not absolutely required for transcription in vitro, but particularly important in cases where Tbp or Tfb function is not optimal. It dynamically alters the nucleic acid-binding properties of RNA polymerases by stabilizing the initiation complex and destabilizing elongation complexes. Seems to translocate with the RNA polymerase following initiation and acts by binding to the non template strand of the transcription bubble in elongation complexes. In Methanocella arvoryzae (strain DSM 22066 / NBRC 105507 / MRE50), this protein is Transcription factor E.